A 426-amino-acid chain; its full sequence is Glutamyl-tRNA reductase (426 aa).

Substrate-binding positions include 50 to 53 (TCNR), S108, 113 to 115 (EPQ), and Q119. C51 acts as the Nucleophile in catalysis. 188–193 (GAGEMI) lines the NADP(+) pocket.

The protein belongs to the glutamyl-tRNA reductase family. As to quaternary structure, homodimer.

The catalysed reaction is (S)-4-amino-5-oxopentanoate + tRNA(Glu) + NADP(+) = L-glutamyl-tRNA(Glu) + NADPH + H(+). It participates in porphyrin-containing compound metabolism; protoporphyrin-IX biosynthesis; 5-aminolevulinate from L-glutamyl-tRNA(Glu): step 1/2. In terms of biological role, catalyzes the NADPH-dependent reduction of glutamyl-tRNA(Glu) to glutamate 1-semialdehyde (GSA). The polypeptide is Glutamyl-tRNA reductase (Polaromonas sp. (strain JS666 / ATCC BAA-500)).